A 733-amino-acid polypeptide reads, in one-letter code: Submandibular gland protein C (733 aa).

Positions 1-20 (MKLILLYLAVVLCFVGKARS) are cleaved as a signal peptide. The tract at residues 48–91 (KSSGGSKDYNLSDGGKSNSRKNLSPATGGSATQQSNLDDSHAPN) is disordered. Asn57 carries N-linked (GlcNAc...) asparagine glycosylation. Over residues 62–84 (GKSNSRKNLSPATGGSATQQSNL) the composition is skewed to polar residues. Residues Asn141 and Asn187 are each glycosylated (N-linked (GlcNAc...) asparagine). Disordered stretches follow at residues 172–204 (GQQA…ADKP), 249–330 (LTED…NSSN), 369–450 (LTED…NSSN), and 496–733 (SVTE…PSVA). Over residues 186-199 (ENSSLSTGSATSNK) the composition is skewed to polar residues. Low complexity predominate over residues 256–270 (TSTSASVSGDSSTSS). Positions 300-318 (GSKQNVEDSTLSTGSATSN) are enriched in polar residues. An N-linked (GlcNAc...) asparagine glycan is attached at Asn327. Positions 376 to 390 (TSTSASVSGDSSTSS) are enriched in low complexity. The segment covering 420-438 (GSKQNVEDSTLSTGSATSN) has biased composition (polar residues). N-linked (GlcNAc...) asparagine glycosylation is found at Asn447, Asn514, and Asn528. 2 stretches are compositionally biased toward polar residues: residues 496–516 (SVTE…NNLS) and 525–535 (NPTNGSSSASS). A compositionally biased stretch (basic and acidic residues) spans 538-552 (KPYEEGMRKLLKFLE). Composition is skewed to low complexity over residues 563–574 (SVSGMSSESSRS) and 609–619 (SSNSSTGSATS). Asn611 carries an N-linked (GlcNAc...) asparagine glycan. The span at 654–665 (GFNGPEGVGENN) shows a compositional bias: gly residues. The span at 677–701 (GSKSDSGSHNLSSGSGSRSNVSTGG) shows a compositional bias: low complexity. N-linked (GlcNAc...) asparagine glycans are attached at residues Asn686 and Asn696. Over residues 722–733 (TGKTQSGSPSVA) the composition is skewed to polar residues.

N-glycosylated. Detected in terminal tubule cells of the submandibular gland (at protein level). Expressed in submandibular salivary glands of 3-day-old males but not adults. Expression in adult submandibular glands is restricted to females. Isoform 5 is expressed in both 3-day-old and adult sublingual glands.

The protein localises to the secreted. This chain is Submandibular gland protein C (Muc19), found in Mus musculus (Mouse).